The chain runs to 91 residues: uncharacterized protein (91 aa).

Residues 12–34 (FAIVYANITFLFYYLLDFTLPFH) traverse the membrane as a helical segment.

The protein resides in the membrane. This is an uncharacterized protein from Saccharomyces cerevisiae (strain ATCC 204508 / S288c) (Baker's yeast).